The primary structure comprises 211 residues: Nucleoside triphosphate pyrophosphatase (211 aa).

The active-site Proton acceptor is Asp-76.

This sequence belongs to the Maf family. The cofactor is a divalent metal cation.

Its subcellular location is the cytoplasm. It carries out the reaction a ribonucleoside 5'-triphosphate + H2O = a ribonucleoside 5'-phosphate + diphosphate + H(+). The catalysed reaction is a 2'-deoxyribonucleoside 5'-triphosphate + H2O = a 2'-deoxyribonucleoside 5'-phosphate + diphosphate + H(+). Nucleoside triphosphate pyrophosphatase. May have a dual role in cell division arrest and in preventing the incorporation of modified nucleotides into cellular nucleic acids. The polypeptide is Nucleoside triphosphate pyrophosphatase (Saccharopolyspora erythraea (strain ATCC 11635 / DSM 40517 / JCM 4748 / NBRC 13426 / NCIMB 8594 / NRRL 2338)).